The following is a 185-amino-acid chain: UPF0397 protein CPR_1556 (185 aa).

5 consecutive transmembrane segments (helical) span residues 11–31, 44–64, 71–91, 111–131, and 149–169; these read IVAI…GSLP, AFLS…IGFI, IVFF…VGLI, IFMF…LVAP, and GVIG…VLIS.

The protein belongs to the UPF0397 family.

It is found in the cell membrane. The polypeptide is UPF0397 protein CPR_1556 (Clostridium perfringens (strain SM101 / Type A)).